The chain runs to 421 residues: Phosphoribosylamine--glycine ligase (421 aa).

Positions 108–314 constitute an ATP-grasp domain; the sequence is KEIMVKYNVP…FAQNIDDIMM (207 aa). 134–195 contributes to the ATP binding site; it reads IEEQGAPIVV…EEFLDGEEFS (62 aa). Mg(2+)-binding residues include Glu284 and Asn286.

This sequence belongs to the GARS family. Mg(2+) serves as cofactor. Mn(2+) is required as a cofactor.

It catalyses the reaction 5-phospho-beta-D-ribosylamine + glycine + ATP = N(1)-(5-phospho-beta-D-ribosyl)glycinamide + ADP + phosphate + H(+). It functions in the pathway purine metabolism; IMP biosynthesis via de novo pathway; N(1)-(5-phospho-D-ribosyl)glycinamide from 5-phospho-alpha-D-ribose 1-diphosphate: step 2/2. This is Phosphoribosylamine--glycine ligase from Streptococcus pyogenes serotype M18 (strain MGAS8232).